The following is a 382-amino-acid chain: D-galactonate dehydratase (382 aa).

Aspartate 183 contacts Mg(2+). Catalysis depends on histidine 185, which acts as the Proton donor. Positions 209 and 235 each coordinate Mg(2+). The active-site Proton acceptor is the histidine 285.

It belongs to the mandelate racemase/muconate lactonizing enzyme family. GalD subfamily. Mg(2+) is required as a cofactor.

It carries out the reaction D-galactonate = 2-dehydro-3-deoxy-D-galactonate + H2O. It participates in carbohydrate acid metabolism; D-galactonate degradation; D-glyceraldehyde 3-phosphate and pyruvate from D-galactonate: step 1/3. Functionally, catalyzes the dehydration of D-galactonate to 2-keto-3-deoxy-D-galactonate. The sequence is that of D-galactonate dehydratase from Cronobacter sakazakii (strain ATCC BAA-894) (Enterobacter sakazakii).